The chain runs to 473 residues: Photosystem II CP43 reaction center protein (473 aa).

Positions 1 to 14 (MKTLYSLRRSYPVE) are excised as a propeptide. Thr-15 is modified (N-acetylthreonine). The residue at position 15 (Thr-15) is a Phosphothreonine. 5 helical membrane-spanning segments follow: residues 69 to 93 (LFEVAHFVPEKPMYEQGLILLPHLA), 134 to 155 (LIGPETLEESFPFFGYVWKDKN), 178 to 200 (KALYFGGLYDTWAPGGGDVRKIT), 255 to 275 (KPFAWARRAFVWSGEAYLSYS), and 291 to 312 (WFNNTAYPSEFYGPTGPEASQA). Glu-367 is a [CaMn4O5] cluster binding site. The helical transmembrane segment at 447-471 (RARAAAAGFEKGIDRDTEPVLFMNP) threads the bilayer.

Belongs to the PsbB/PsbC family. PsbC subfamily. In terms of assembly, PSII is composed of 1 copy each of membrane proteins PsbA, PsbB, PsbC, PsbD, PsbE, PsbF, PsbH, PsbI, PsbJ, PsbK, PsbL, PsbM, PsbT, PsbX, PsbY, PsbZ, Psb30/Ycf12, at least 3 peripheral proteins of the oxygen-evolving complex and a large number of cofactors. It forms dimeric complexes. Requires Binds multiple chlorophylls and provides some of the ligands for the Ca-4Mn-5O cluster of the oxygen-evolving complex. It may also provide a ligand for a Cl- that is required for oxygen evolution. PSII binds additional chlorophylls, carotenoids and specific lipids. as cofactor.

It localises to the plastid. Its subcellular location is the chloroplast thylakoid membrane. In terms of biological role, one of the components of the core complex of photosystem II (PSII). It binds chlorophyll and helps catalyze the primary light-induced photochemical processes of PSII. PSII is a light-driven water:plastoquinone oxidoreductase, using light energy to abstract electrons from H(2)O, generating O(2) and a proton gradient subsequently used for ATP formation. This Zygnema circumcarinatum (Green alga) protein is Photosystem II CP43 reaction center protein.